Reading from the N-terminus, the 203-residue chain is Dual-action ribosomal maturation protein DarP (203 aa).

Residues M1–G13 are compositionally biased toward polar residues. The interval M1 to M39 is disordered. Positions D27 to M39 are enriched in basic and acidic residues.

This sequence belongs to the DarP family.

It localises to the cytoplasm. Functionally, member of a network of 50S ribosomal subunit biogenesis factors which assembles along the 30S-50S interface, preventing incorrect 23S rRNA structures from forming. Promotes peptidyl transferase center (PTC) maturation. This is Dual-action ribosomal maturation protein DarP from Cupriavidus pinatubonensis (strain JMP 134 / LMG 1197) (Cupriavidus necator (strain JMP 134)).